Consider the following 177-residue polypeptide: Large ribosomal subunit protein uL10 (177 aa).

This sequence belongs to the universal ribosomal protein uL10 family. Part of the ribosomal stalk of the 50S ribosomal subunit. The N-terminus interacts with L11 and the large rRNA to form the base of the stalk. The C-terminus forms an elongated spine to which L12 dimers bind in a sequential fashion forming a multimeric L10(L12)X complex.

In terms of biological role, forms part of the ribosomal stalk, playing a central role in the interaction of the ribosome with GTP-bound translation factors. The polypeptide is Large ribosomal subunit protein uL10 (Leptospira interrogans serogroup Icterohaemorrhagiae serovar copenhageni (strain Fiocruz L1-130)).